The chain runs to 651 residues: Probable inactive purple acid phosphatase 9 (651 aa).

The N-terminal stretch at 1–20 (MIAAVYTLFFFFLLISSVYS) is a signal peptide. N-linked (GlcNAc...) asparagine glycans are attached at residues Asn32, Asn96, and Asn202. Residues Asp305 and Tyr308 each contribute to the Fe cation site. Asp305 provides a ligand contact to Zn(2+). Position 338 (Asn338) interacts with Zn(2+). Substrate is bound at residue Asn338. N-linked (GlcNAc...) asparagine glycosylation is found at Asn378 and Asn432. His444 contacts Zn(2+). The N-linked (GlcNAc...) asparagine glycan is linked to Asn475. His483 contributes to the Zn(2+) binding site. 483–485 (HVH) contributes to the substrate binding site. Position 485 (His485) interacts with Fe cation. Asn495 and Asn640 each carry an N-linked (GlcNAc...) asparagine glycan.

The protein belongs to the metallophosphoesterase superfamily. Purple acid phosphatase family. Homodimer. It depends on Fe cation as a cofactor. Zn(2+) is required as a cofactor. As to expression, expressed in roots, stems, leaves, flowers and siliques.

The protein resides in the secreted. In Arabidopsis thaliana (Mouse-ear cress), this protein is Probable inactive purple acid phosphatase 9 (PAP9).